A 78-amino-acid chain; its full sequence is Putative membrane protein insertion efficiency factor (78 aa).

Belongs to the UPF0161 family.

Its subcellular location is the cell membrane. Functionally, could be involved in insertion of integral membrane proteins into the membrane. This Limosilactobacillus reuteri (strain DSM 20016) (Lactobacillus reuteri) protein is Putative membrane protein insertion efficiency factor.